Reading from the N-terminus, the 600-residue chain is DNA mismatch repair protein MutL (600 aa).

It belongs to the DNA mismatch repair MutL/HexB family.

In terms of biological role, this protein is involved in the repair of mismatches in DNA. It is required for dam-dependent methyl-directed DNA mismatch repair. May act as a 'molecular matchmaker', a protein that promotes the formation of a stable complex between two or more DNA-binding proteins in an ATP-dependent manner without itself being part of a final effector complex. In Rickettsia typhi (strain ATCC VR-144 / Wilmington), this protein is DNA mismatch repair protein MutL.